The following is a 321-amino-acid chain: Malate dehydrogenase (321 aa).

Residues 10 to 15 (GSGMIG) and Asp-34 contribute to the NAD(+) site. The substrate site is built by Arg-83 and Arg-89. Residues Asn-96 and 119–121 (ITN) each bind NAD(+). 2 residues coordinate substrate: Asn-121 and Arg-152. Residue His-176 is the Proton acceptor of the active site.

This sequence belongs to the LDH/MDH superfamily. MDH type 3 family.

The catalysed reaction is (S)-malate + NAD(+) = oxaloacetate + NADH + H(+). Catalyzes the reversible oxidation of malate to oxaloacetate. This chain is Malate dehydrogenase, found in Bartonella bacilliformis (strain ATCC 35685 / KC583 / Herrer 020/F12,63).